A 523-amino-acid polypeptide reads, in one-letter code: MTSTRQAGEATEASVRWRAVLLAAVAACAACGLVYELALLTLAASLNGGGIVATSLIVAGYIAALGAGALLIKPLLAHAAIAFIAVEAVLGIIGGLSAAALYAAFAFLDELDGSTLVLAVGTALIGGLVGAEVPLLMTLLQRGRVAGAADAGRTLANLNAADYLGALVGGLAWPFLLLPQLGMIRGAAVTGIVNLAAAGVVSIFLLRHVVSGRQLVTALCALAAALGLIATLLVHSHDIETTGRQQLYADPIIAYRHSAYQEIVVTRRGDDLRLYLDGGLQFCTRDEYRYTESLVYPAVSDGARSVLVLGGGDGLAARELLRQPGIEQIVQVELDPAVIELARTTLRDVNAGSLDNPRVHVVIDDAMSWLRGAAVPPAGFDAVIVDLRDPDTPVLGRLYSTEFYALAARALAPGGLMVVQAGSPYSTPTAFWRIISTIRSAGYAVTPYHVHVPTFGDWGFALARLTDIAPTPAVPSTAPALRFLDQQVLEAATVFSGDIRPRTLDPSTLDNPHIVEDMRHGWD.

Helical transmembrane passes span 20–40 (VLLA…LALL), 51–71 (IVAT…GALL), 88–108 (AVLG…FAFL), 116–136 (LVLA…VPLL), 164–184 (LGAL…LGMI), 186–206 (GAAV…IFLL), and 215–235 (LVTA…LLVH). The tract at residues 203-478 (IFLLRHVVSG…APTPAVPSTA (276 aa)) is spermidine synthase. One can recognise a PABS domain in the interval 231–465 (TLLVHSHDIE…GDWGFALARL (235 aa)). Position 261 (Gln-261) interacts with S-methyl-5'-thioadenosine. Asp-313 provides a ligand contact to spermidine. S-methyl-5'-thioadenosine contacts are provided by residues Glu-333 and 365 to 366 (DA). Asp-386 (proton acceptor) is an active-site residue.

It belongs to the spermidine/spermine synthase family. Homodimer or homotetramer.

Its subcellular location is the cell membrane. The enzyme catalyses S-adenosyl 3-(methylsulfanyl)propylamine + putrescine = S-methyl-5'-thioadenosine + spermidine + H(+). Its pathway is amine and polyamine biosynthesis; spermidine biosynthesis; spermidine from putrescine: step 1/1. Functionally, catalyzes the irreversible transfer of a propylamine group from the amino donor S-adenosylmethioninamine (decarboxy-AdoMet) to putrescine (1,4-diaminobutane) to yield spermidine. This is Polyamine aminopropyltransferase from Mycobacterium bovis (strain ATCC BAA-935 / AF2122/97).